Here is a 461-residue protein sequence, read N- to C-terminus: Homocitrate synthase (461 aa).

The 256-residue stretch at 4 to 259 (VGILDSTLRE…IEVVKLDKLQ (256 aa)) folds into the Pyruvate carboxyltransferase domain. R12 lines the 2-oxoglutarate pocket. Residue E13 participates in Mg(2+) binding. Residues H76, R136, and T170 each coordinate 2-oxoglutarate. Residues H198 and H200 each contribute to the Mg(2+) site. H292 functions as the Proton acceptor in the catalytic mechanism.

This sequence belongs to the alpha-IPM synthase/homocitrate synthase family. Homocitrate synthase LYS20/LYS21 subfamily. Mg(2+) serves as cofactor. Mn(2+) is required as a cofactor.

The catalysed reaction is acetyl-CoA + 2-oxoglutarate + H2O = (2R)-homocitrate + CoA + H(+). It functions in the pathway amino-acid biosynthesis; L-lysine biosynthesis via AAA pathway; L-alpha-aminoadipate from 2-oxoglutarate: step 1/5. Its function is as follows. Catalyzes the aldol-type condensation of 2-oxoglutarate with acetyl-CoA to yield homocitrate. Carries out the first step of the alpha-aminoadipate (AAA) lysine biosynthesis pathway. In Saccharolobus solfataricus (strain ATCC 35092 / DSM 1617 / JCM 11322 / P2) (Sulfolobus solfataricus), this protein is Homocitrate synthase.